A 245-amino-acid polypeptide reads, in one-letter code: RAD51-like protein 1 (245 aa).

Interacts with brc-2 and rad-51.

It localises to the nucleus. In terms of biological role, has a role in the homologous recombination repair (HRR) of genomic DNA during meiosis. Required for rad-51 recruitment onto ssDNA gaps generated at stalled replication fork barriers. This is RAD51-like protein 1 (rfs-1) from Caenorhabditis elegans.